A 315-amino-acid chain; its full sequence is DNA-directed RNA polymerase subunit alpha (315 aa).

The tract at residues 1–228 (MLEIEKPKIE…EHFKLFMTLT (228 aa)) is alpha N-terminal domain (alpha-NTD). The segment at 245-315 (KEKVLEMTIE…LELGLKQSEE (71 aa)) is alpha C-terminal domain (alpha-CTD).

Belongs to the RNA polymerase alpha chain family. As to quaternary structure, homodimer. The RNAP catalytic core consists of 2 alpha, 1 beta, 1 beta' and 1 omega subunit. When a sigma factor is associated with the core the holoenzyme is formed, which can initiate transcription.

It catalyses the reaction RNA(n) + a ribonucleoside 5'-triphosphate = RNA(n+1) + diphosphate. DNA-dependent RNA polymerase catalyzes the transcription of DNA into RNA using the four ribonucleoside triphosphates as substrates. In Clostridium tetani (strain Massachusetts / E88), this protein is DNA-directed RNA polymerase subunit alpha.